The primary structure comprises 257 residues: Ribonuclease HII (257 aa).

Residues threonine 72–lysine 257 enclose the RNase H type-2 domain. A divalent metal cation contacts are provided by aspartate 78, glutamate 79, and aspartate 170.

The protein belongs to the RNase HII family. It depends on Mn(2+) as a cofactor. Requires Mg(2+) as cofactor.

The protein resides in the cytoplasm. The catalysed reaction is Endonucleolytic cleavage to 5'-phosphomonoester.. Functionally, endonuclease that specifically degrades the RNA of RNA-DNA hybrids. This Bacillus cereus (strain G9842) protein is Ribonuclease HII.